Consider the following 154-residue polypeptide: Putative antiporter subunit mnhG2 (154 aa).

3 helical membrane passes run 11–31 (IASI…IGIV), 51–71 (VLLT…FFSV), and 72–92 (RLLL…HLIS).

Belongs to the CPA3 antiporters (TC 2.A.63) subunit G family. May form a heterooligomeric complex that consists of seven subunits: mnhA2, mnhB2, mnhC2, mnhD2, mnhE2, mnhF2 and mnhG2.

It localises to the cell membrane. This chain is Putative antiporter subunit mnhG2 (mnhG2), found in Staphylococcus epidermidis (strain ATCC 35984 / DSM 28319 / BCRC 17069 / CCUG 31568 / BM 3577 / RP62A).